The primary structure comprises 361 residues: Isocitrate dehydrogenase [NAD] subunit 1, mitochondrial (361 aa).

Residues methionine 1–serine 12 constitute a mitochondrion transit peptide. Substrate-binding residues include arginine 110, arginine 141, and aspartate 229. Mg(2+) is bound at residue aspartate 229.

The protein belongs to the isocitrate and isopropylmalate dehydrogenases family. In terms of assembly, octamer of two non-identical subunits IDH1 and IDH2. The cofactor is Mg(2+). It depends on Mn(2+) as a cofactor.

The protein localises to the mitochondrion. It catalyses the reaction D-threo-isocitrate + NAD(+) = 2-oxoglutarate + CO2 + NADH. Functionally, performs an essential role in the oxidative function of the citric acid cycle. This Kluyveromyces lactis (strain ATCC 8585 / CBS 2359 / DSM 70799 / NBRC 1267 / NRRL Y-1140 / WM37) (Yeast) protein is Isocitrate dehydrogenase [NAD] subunit 1, mitochondrial (IDH1).